The following is a 273-amino-acid chain: Large ribosomal subunit protein uL2c (273 aa).

The tract at residues 223–273 (MNPVDHPHGGGEGRAPIGRKKPTTPWGYPALGRRSRKRNKYSDSFILRRRK) is disordered.

Belongs to the universal ribosomal protein uL2 family. In terms of assembly, part of the 50S ribosomal subunit.

The protein resides in the plastid. It is found in the chloroplast. This chain is Large ribosomal subunit protein uL2c (rpl2), found in Calycanthus floridus var. glaucus (Eastern sweetshrub).